A 116-amino-acid polypeptide reads, in one-letter code: WMMIVEQKCRVIVMLAKCFEAGKKKCQKYWPDSEETKTFGRVKVFNADEVKYCGFLRRRFHIESFDENDVCGRVFQYQYINWPDHSVPNTTSNLVRMHKYVIQCLEEIGGDAPMVV.

The region spanning 1 to 116 (WMMIVEQKCR…EIGGDAPMVV (116 aa)) is the Tyrosine-protein phosphatase domain. Asp-84 serves as a coordination point for substrate.

Belongs to the protein-tyrosine phosphatase family.

It carries out the reaction O-phospho-L-tyrosyl-[protein] + H2O = L-tyrosyl-[protein] + phosphate. This Styela plicata (Wrinkled sea squirt) protein is Tyrosine-protein phosphatase 20 (STY-20).